Here is a 318-residue protein sequence, read N- to C-terminus: NADH-ubiquinone oxidoreductase chain 1 (318 aa).

The next 8 helical transmembrane spans lie at 2-22 (PMANLLLLIVPILIAMAFLML), 68-88 (ITLYITAPTLALTIALLLWTP), 100-120 (LGLLFILATSSLAVYSILWSG), 146-166 (LAIILLSTLLMSGSFNLSTLI), 171-191 (HLWLLLPSWPLAMMWFISTLA), 231-251 (IIMMNTLTTTIFLGTTYDALS), 253-273 (ELYTTYFVTKTLLLTSLFLWI), and 294-314 (LPLTLALLMWYVSMPITISSI).

It belongs to the complex I subunit 1 family. In terms of assembly, core subunit of respiratory chain NADH dehydrogenase (Complex I) which is composed of 45 different subunits.

The protein resides in the mitochondrion inner membrane. It carries out the reaction a ubiquinone + NADH + 5 H(+)(in) = a ubiquinol + NAD(+) + 4 H(+)(out). In terms of biological role, core subunit of the mitochondrial membrane respiratory chain NADH dehydrogenase (Complex I) which catalyzes electron transfer from NADH through the respiratory chain, using ubiquinone as an electron acceptor. Essential for the catalytic activity and assembly of complex I. The protein is NADH-ubiquinone oxidoreductase chain 1 (MT-ND1) of Homo sapiens (Human).